Reading from the N-terminus, the 488-residue chain is E3 ubiquitin-protein ligase TRIM39 (488 aa).

The RING-type zinc finger occupies 29–70 (CSVCLEYLKEPVIIECGHNFCKACITRWWEDLERDFPCPVCR). The segment at 102–143 (RDESLCSQHHEPLSLFCYEDQEAVCLICAISHTHRPHTVVPM) adopts a B box-type zinc-finger fold. Zn(2+)-binding residues include Cys-107, His-110, Cys-129, and His-135. Positions 181-250 (ELKRLVESRR…AHLAAEVEGK (70 aa)) form a coiled coil. 2 interaction with CDKN1A regions span residues 268–307 (KCEK…QLIA) and 359–488 (TSGR…TDWE). Positions 289–484 (SNFPRQYFAL…NAAPLTIRPP (196 aa)) constitute a B30.2/SPRY domain.

The protein belongs to the TRIM/RBCC family. In terms of assembly, interacts with MOAP1. Interacts with CDKN1A. Autoubiquitinated.

The protein localises to the cytoplasm. It localises to the cytosol. Its subcellular location is the mitochondrion. The protein resides in the nucleus. The catalysed reaction is S-ubiquitinyl-[E2 ubiquitin-conjugating enzyme]-L-cysteine + [acceptor protein]-L-lysine = [E2 ubiquitin-conjugating enzyme]-L-cysteine + N(6)-ubiquitinyl-[acceptor protein]-L-lysine.. Its pathway is protein modification; protein ubiquitination. Its function is as follows. E3 ubiquitin-protein ligase. May facilitate apoptosis by inhibiting APC/C-Cdh1-mediated poly-ubiquitination and subsequent proteasome-mediated degradation of the pro-apoptotic protein MOAP1. Regulates the G1/S transition of the cell cycle and DNA damage-induced G2 arrest by stabilizing CDKN1A/p21. Positively regulates CDKN1A/p21 stability by competing with DTL for CDKN1A/p21 binding, therefore disrupting DCX(DTL) E3 ubiquitin ligase complex-mediated CDKN1A/p21 ubiquitination and degradation. This is E3 ubiquitin-protein ligase TRIM39 (Trim39) from Mus musculus (Mouse).